Reading from the N-terminus, the 292-residue chain is Pantothenate synthetase (292 aa).

32–39 is a binding site for ATP; it reads MGFLHEGH. The active-site Proton donor is the His39. (R)-pantoate is bound at residue Gln63. A beta-alanine-binding site is contributed by Gln63. Residue 150 to 153 participates in ATP binding; that stretch reads GEKD. Gln156 provides a ligand contact to (R)-pantoate. Residues Val179 and 187 to 190 each bind ATP; that span reads MSSR.

The protein belongs to the pantothenate synthetase family. Homodimer.

The protein localises to the cytoplasm. It catalyses the reaction (R)-pantoate + beta-alanine + ATP = (R)-pantothenate + AMP + diphosphate + H(+). It participates in cofactor biosynthesis; (R)-pantothenate biosynthesis; (R)-pantothenate from (R)-pantoate and beta-alanine: step 1/1. Catalyzes the condensation of pantoate with beta-alanine in an ATP-dependent reaction via a pantoyl-adenylate intermediate. The protein is Pantothenate synthetase of Myxococcus xanthus (strain DK1622).